Reading from the N-terminus, the 560-residue chain is Protein DA1-related 7 (560 aa).

UIM domains follow at residues 43 to 62, 92 to 111, and 155 to 174; these read SEAD…QETS, EEDQ…KGKS, and NEDA…KGQI. In terms of domain architecture, LIM zinc-binding spans 199–269; sequence SICDGCKSAI…HVCKKKFPGR (71 aa).

In terms of assembly, interacts with ubiquitin.

Functionally, ubiquitin receptor that probably regulates developmental process. In Arabidopsis thaliana (Mouse-ear cress), this protein is Protein DA1-related 7 (DAR7).